A 428-amino-acid chain; its full sequence is uncharacterized protein (428 aa).

Disordered stretches follow at residues 1 to 25 (MRDN…PTRT), 157 to 219 (DTAK…TEQV), and 247 to 271 (DFGT…PWRP). Residues 12-22 (GSESQQTTYDP) show a composition bias toward polar residues. Basic and acidic residues predominate over residues 157 to 171 (DTAKSNEKLQGDESK). The span at 172–186 (SSNGSSSTSTTTQRG) shows a compositional bias: low complexity. Over residues 206-217 (GSQGNSGEQGTE) the composition is skewed to polar residues.

This sequence belongs to the adhesin P1 family.

This is an uncharacterized protein from Mycoplasma pneumoniae (strain ATCC 29342 / M129 / Subtype 1) (Mycoplasmoides pneumoniae).